Consider the following 201-residue polypeptide: Small ribosomal subunit protein uS4c (201 aa).

An S4 RNA-binding domain is found at 89–151 (MRLDNILFRL…QKSKTLIQNY (63 aa)).

Belongs to the universal ribosomal protein uS4 family. As to quaternary structure, part of the 30S ribosomal subunit. Contacts protein S5. The interaction surface between S4 and S5 is involved in control of translational fidelity.

Its subcellular location is the plastid. The protein localises to the chloroplast. Functionally, one of the primary rRNA binding proteins, it binds directly to 16S rRNA where it nucleates assembly of the body of the 30S subunit. Its function is as follows. With S5 and S12 plays an important role in translational accuracy. The sequence is that of Small ribosomal subunit protein uS4c (rps4) from Phaseolus vulgaris (Kidney bean).